The sequence spans 625 residues: Endoglucanase D (625 aa).

Residues 1-17 (SLTGVFPSGLIETKVSA) form the signal peptide. Residue Asp-177 is the Nucleophile of the active site. Residues His-492 and Asp-522 contribute to the active site. Glu-531 functions as the Proton donor in the catalytic mechanism. Residues 555-625 (NEVLYGDVND…LIRVIEKLPI (71 aa)) enclose the Dockerin domain.

The protein belongs to the glycosyl hydrolase 9 (cellulase E) family. It depends on Ca(2+) as a cofactor.

The catalysed reaction is Endohydrolysis of (1-&gt;4)-beta-D-glucosidic linkages in cellulose, lichenin and cereal beta-D-glucans.. In terms of biological role, this enzyme catalyzes the endohydrolysis of 1,4-beta-glucosidic linkages in cellulose, lichenin and cereal beta-D-glucans. The polypeptide is Endoglucanase D (celD) (Acetivibrio thermocellus (Hungateiclostridium thermocellum)).